The following is a 151-amino-acid chain: Transcription elongation factor GreA (151 aa).

Positions 41–62 (AEYHAAREKQSFIEGRIKELEA) form a coiled coil.

The protein belongs to the GreA/GreB family.

Necessary for efficient RNA polymerase transcription elongation past template-encoded arresting sites. The arresting sites in DNA have the property of trapping a certain fraction of elongating RNA polymerases that pass through, resulting in locked ternary complexes. Cleavage of the nascent transcript by cleavage factors such as GreA or GreB allows the resumption of elongation from the new 3'terminus. GreA releases sequences of 2 to 3 nucleotides. This chain is Transcription elongation factor GreA, found in Cereibacter sphaeroides (strain ATCC 17023 / DSM 158 / JCM 6121 / CCUG 31486 / LMG 2827 / NBRC 12203 / NCIMB 8253 / ATH 2.4.1.) (Rhodobacter sphaeroides).